The chain runs to 167 residues: MAHIEKQAGELQEKLIAVNRVSKTVKGGRIFSFTALTVVGDGNGRVGFGYGKAREVPAAIQKAMEKARRNMINVALNHGTLQHPVKGTHTGSRVFMQPASEGTGIIAGGAMRAVLEVAGVRNVLAKAYGSTNPINVVRATIDGLENMKSPDMVAAKRGKSVEEILGK.

An S5 DRBM domain is found at 11 to 74; the sequence is LQEKLIAVNR…EKARRNMINV (64 aa).

It belongs to the universal ribosomal protein uS5 family. As to quaternary structure, part of the 30S ribosomal subunit. Contacts proteins S4 and S8.

With S4 and S12 plays an important role in translational accuracy. Functionally, located at the back of the 30S subunit body where it stabilizes the conformation of the head with respect to the body. The chain is Small ribosomal subunit protein uS5 from Klebsiella pneumoniae subsp. pneumoniae (strain ATCC 700721 / MGH 78578).